We begin with the raw amino-acid sequence, 198 residues long: Nucleoid occlusion factor SlmA (198 aa).

Residues 10 to 70 (NRREEILQSL…SLIEFIEDSL (61 aa)) form the HTH tetR-type domain. The segment at residues 33 to 52 (TTAKLAASVGVSEAALYRHF) is a DNA-binding region (H-T-H motif). Residues 117 to 145 (EQDRLQGRINQLFERIEAQLRQVMREKKM) are a coiled coil.

Belongs to the nucleoid occlusion factor SlmA family. In terms of assembly, homodimer. Interacts with FtsZ.

The protein localises to the cytoplasm. The protein resides in the nucleoid. Its function is as follows. Required for nucleoid occlusion (NO) phenomenon, which prevents Z-ring formation and cell division over the nucleoid. Acts as a DNA-associated cell division inhibitor that binds simultaneously chromosomal DNA and FtsZ, and disrupts the assembly of FtsZ polymers. SlmA-DNA-binding sequences (SBS) are dispersed on non-Ter regions of the chromosome, preventing FtsZ polymerization at these regions. The chain is Nucleoid occlusion factor SlmA from Klebsiella pneumoniae subsp. pneumoniae (strain ATCC 700721 / MGH 78578).